Here is a 209-residue protein sequence, read N- to C-terminus: Ribosomal RNA large subunit methyltransferase E (209 aa).

Positions 63, 65, 83, 99, and 124 each coordinate S-adenosyl-L-methionine. The active-site Proton acceptor is the Lys-164. Residues 191–209 (EASRGRSREVYIVATGYKG) enclose the TRAM domain.

The protein belongs to the class I-like SAM-binding methyltransferase superfamily. RNA methyltransferase RlmE family.

Its subcellular location is the cytoplasm. The catalysed reaction is uridine(2552) in 23S rRNA + S-adenosyl-L-methionine = 2'-O-methyluridine(2552) in 23S rRNA + S-adenosyl-L-homocysteine + H(+). Functionally, specifically methylates the uridine in position 2552 of 23S rRNA at the 2'-O position of the ribose in the fully assembled 50S ribosomal subunit. This chain is Ribosomal RNA large subunit methyltransferase E, found in Haemophilus influenzae (strain 86-028NP).